The sequence spans 206 residues: dTTP/UTP pyrophosphatase (206 aa).

Catalysis depends on Asp-79, which acts as the Proton acceptor.

The protein belongs to the Maf family. YhdE subfamily. A divalent metal cation serves as cofactor.

The protein localises to the cytoplasm. The catalysed reaction is dTTP + H2O = dTMP + diphosphate + H(+). It catalyses the reaction UTP + H2O = UMP + diphosphate + H(+). In terms of biological role, nucleoside triphosphate pyrophosphatase that hydrolyzes dTTP and UTP. May have a dual role in cell division arrest and in preventing the incorporation of modified nucleotides into cellular nucleic acids. The polypeptide is dTTP/UTP pyrophosphatase (Rhizobium meliloti (strain 1021) (Ensifer meliloti)).